A 793-amino-acid polypeptide reads, in one-letter code: Cation channel sperm-associated auxiliary subunit delta (793 aa).

Residues 1–20 (MLMLMLVAAVTMWLRPLVTA) form the signal peptide. At 21–725 (QPLCRARTVR…AFPVQLVSAG (705 aa)) the chain is on the extracellular side. Cystine bridges form between C24/C370, C60/C146, C145/C153, C388/C497, C511/C703, C526/C573, and C625/C653. An N-linked (GlcNAc...) asparagine glycan is attached at N128. N-linked (GlcNAc...) asparagine glycans are attached at residues N231, N241, N473, N539, and N631. Residues 726 to 747 (VVMVLLISSILGSVWLAYMIPR) traverse the membrane as a helical segment. Residues 748 to 793 (LLRTARGRRMTSFVAQLYGRCKTVCQFRASATARTGSKPMGRHRSS) lie on the Cytoplasmic side of the membrane.

Belongs to the CATSPERD family. As to quaternary structure, component of the CatSper complex or CatSpermasome composed of the core pore-forming members CATSPER1, CATSPER2, CATSPER3 and CATSPER4 as well as auxiliary members CATSPERB, CATSPERG, CATSPERD, CATSPERE, CATSPERZ, C2CD6/CATSPERT, TMEM249, TMEM262 and EFCAB9. HSPA1 may be an additional auxiliary complex member. The core complex members CATSPER1, CATSPER2, CATSPER3 and CATSPER4 form a heterotetrameric channel. The auxiliary CATSPERB, CATSPERG, CATSPERD and CATSPERE subunits form a pavilion-like structure over the pore which stabilizes the complex through interactions with CATSPER4, CATSPER3, CATSPER1 and CATSPER2 respectively. TMEM262/CATSPERH interacts with CATSPERB, further stabilizing the complex. C2CD6/CATSPERT interacts at least with CATSPERD and is required for targeting the CatSper complex in the flagellar membrane.

Its subcellular location is the cell projection. The protein localises to the cilium. It is found in the flagellum membrane. Its function is as follows. Auxiliary component of the CatSper complex, a complex involved in sperm cell hyperactivation. Sperm cell hyperactivation is needed for sperm motility which is essential late in the preparation of sperm for fertilization. Required for CATSPER1 stability before intraflagellar transport and/or incorporation of the CatSper complex channel into the flagellar membrane. This is Cation channel sperm-associated auxiliary subunit delta from Macaca fascicularis (Crab-eating macaque).